A 661-amino-acid polypeptide reads, in one-letter code: Transketolase (661 aa).

N-acetylserine is present on Ser-2. His-31 provides a ligand contact to substrate. Thiamine diphosphate is bound by residues His-71 and 119–121; that span reads GPL. Position 160 (Asp-160) interacts with Mg(2+). Thiamine diphosphate-binding residues include Gly-161 and Asn-190. Mg(2+) is bound by residues Asn-190 and Val-192. 3 residues coordinate substrate: His-267, Arg-359, and Ser-386. His-267 provides a ligand contact to thiamine diphosphate. Glu-413 serves as the catalytic Proton donor. Thiamine diphosphate is bound at residue Phe-439. Substrate-binding residues include His-463, Asp-471, and Arg-522.

Belongs to the transketolase family. As to quaternary structure, homodimer. The cofactor is Mg(2+). Ca(2+) serves as cofactor. It depends on Mn(2+) as a cofactor. Requires Co(2+) as cofactor. Thiamine diphosphate is required as a cofactor.

The catalysed reaction is D-sedoheptulose 7-phosphate + D-glyceraldehyde 3-phosphate = aldehydo-D-ribose 5-phosphate + D-xylulose 5-phosphate. In terms of biological role, catalyzes the transfer of a two-carbon ketol group from a ketose donor to an aldose acceptor, via a covalent intermediate with the cofactor thiamine pyrophosphate. This chain is Transketolase (tkt-1), found in Dictyostelium discoideum (Social amoeba).